A 198-amino-acid polypeptide reads, in one-letter code: Glycerol-3-phosphate acyltransferase (198 aa).

6 helical membrane-spanning segments follow: residues 1 to 21 (MHIL…GFLF), 50 to 70 (WPAF…VKIA), 77 to 97 (NLFE…PIWL), 111 to 131 (MFIA…LIIL), 136 to 156 (IVSL…FLDI), and 157 to 177 (GSTN…VIWK).

Belongs to the PlsY family. In terms of assembly, probably interacts with PlsX.

Its subcellular location is the cell inner membrane. The enzyme catalyses an acyl phosphate + sn-glycerol 3-phosphate = a 1-acyl-sn-glycero-3-phosphate + phosphate. It functions in the pathway lipid metabolism; phospholipid metabolism. Catalyzes the transfer of an acyl group from acyl-phosphate (acyl-PO(4)) to glycerol-3-phosphate (G3P) to form lysophosphatidic acid (LPA). This enzyme utilizes acyl-phosphate as fatty acyl donor, but not acyl-CoA or acyl-ACP. In Prochlorococcus marinus subsp. pastoris (strain CCMP1986 / NIES-2087 / MED4), this protein is Glycerol-3-phosphate acyltransferase.